We begin with the raw amino-acid sequence, 369 residues long: Probable trehalose-phosphate phosphatase D (369 aa).

A disordered region spans residues Arg-63–Asp-85.

This sequence belongs to the trehalose phosphatase family. The cofactor is a divalent metal cation.

It catalyses the reaction alpha,alpha-trehalose 6-phosphate + H2O = alpha,alpha-trehalose + phosphate. The protein operates within glycan biosynthesis; trehalose biosynthesis. In terms of biological role, removes the phosphate from trehalose 6-phosphate to produce free trehalose. Trehalose accumulation in plant may improve abiotic stress tolerance. The protein is Probable trehalose-phosphate phosphatase D (TPPD) of Arabidopsis thaliana (Mouse-ear cress).